Here is a 466-residue protein sequence, read N- to C-terminus: Protein tilB homolog (466 aa).

LRR repeat units lie at residues 22–43, 45–66, 67–88, and 89–110; these read SLEELSLHQQEIERLEHIDKWC, DLKILYLQNNLIGKIENVSKLK, KLEYLNLALNNIEKIENLEGCE, and ELAKLDLTVNFIGELSSIKTLK. In terms of domain architecture, LRRCT spans 123–161; it reads NPCAFFDHYREFVVATLPQLKWLDGKGIEPSERIKALQE. A coiled-coil region spans residues 178–204; sequence LKRAKLKEEAQRKHQEEDKNEDKRSNA. Composition is skewed to basic and acidic residues over residues 185–202 and 269–279; these read EEAQRKHQEEDKNEDKRS and EKQRKNQEKLS. Disordered stretches follow at residues 185–206 and 269–288; these read EEAQRKHQEEDKNEDKRSNAGF and EKQRKNQEKLSERKKKVKPP. Positions 301–396 constitute a CS domain; that stretch reads VNEPKIDFSL…GGQRAFTSVK (96 aa). The tract at residues 418 to 466 is disordered; it reads VDPSKHSFPDVTNIVQGKKHTPRRRPEPKIIPSEEDPTFEDNPEVPPLI. Acidic residues predominate over residues 450 to 460; sequence SEEDPTFEDNP.

Belongs to the tilB family. As to quaternary structure, interacts (via CS domain) with ZMYND10 (via C-terminus).

It localises to the cytoplasm. The protein resides in the cell projection. The protein localises to the cilium. Its function is as follows. May play a role in dynein arm assembly, hence essential for proper axoneme building for cilia motility. This is Protein tilB homolog (LRCC6) from Macaca fascicularis (Crab-eating macaque).